The sequence spans 309 residues: MQLEFLGTGAGSPSKQRNVASVALRLLEERNAIWLFDVGEATQHQILNTTIRPRKIEKIFITHLHGDHIFGLPGLLSSRSFQGGTEPLTIYGPVGIKRYVQTSLQVSESRLSYPLHFVEITDDGELFNDHGFRVIARKLDHKIACFGYRIEEADHPGELQVEKLREQKVPSGPIYGQLKAGKTVTLPDGRVLDGHDFIGTPQPGRIIAILGDTRQTKNAILLAQNADVLVHESTFAKDETKMAHNYYHSTSKQAAEIAKKAGVKKLLLNHISARYTGKAAYQLAYQVRNIIPDTRVVNDFDVIDIPFKK.

7 residues coordinate Zn(2+): His63, His65, Asp67, His68, His141, Asp212, and His270. Asp67 serves as the catalytic Proton acceptor.

Belongs to the RNase Z family. As to quaternary structure, homodimer. Requires Zn(2+) as cofactor.

The catalysed reaction is Endonucleolytic cleavage of RNA, removing extra 3' nucleotides from tRNA precursor, generating 3' termini of tRNAs. A 3'-hydroxy group is left at the tRNA terminus and a 5'-phosphoryl group is left at the trailer molecule.. Zinc phosphodiesterase, which displays some tRNA 3'-processing endonuclease activity. Probably involved in tRNA maturation, by removing a 3'-trailer from precursor tRNA. In Limosilactobacillus reuteri (strain DSM 20016) (Lactobacillus reuteri), this protein is Ribonuclease Z.